The following is a 739-amino-acid chain: BEL1-like homeodomain protein 2 (739 aa).

Disordered stretches follow at residues 23–73 and 143–222; these read SQDY…ESSV and LMNP…NSQT. The span at 41–58 shows a compositional bias: polar residues; that stretch reads NFSNGFDRSDSPNLTTQQ. Residues 145–155 show a composition bias toward pro residues; sequence NPPPPQQPPSP. Over residues 179–190 the composition is skewed to low complexity; sequence TNTTHHQNYTNH. An SR/KY domain region spans residues 316-332; the sequence is SRYTTAAQELLEEFCSV. Residues 341–378 form a disordered region; the sequence is KLGNSSNPNTCGGDGGGSSPSSAGANKEHPPLSASDRI. The tract at residues 376–447 is BELL domain; the sequence is DRIEHQRRKV…CLKDAVAAQL (72 aa). The homeobox DNA-binding region spans 498-560; sequence AWRPQRGLPE…NARVRLWKPM (63 aa). The disordered stretch occupies residues 567–627; it reads QESKEREREE…TAPDASDADA (61 aa). Over residues 576 to 585 the composition is skewed to acidic residues; it reads EELEENEEDQ. The segment covering 586 to 596 has biased composition (basic and acidic residues); sequence ETKNSNDDKST. A compositionally biased stretch (low complexity) spans 597 to 627; it reads KSNNNESNFTAVRTTSQTPTTTAPDASDADA.

The protein belongs to the TALE/BELL homeobox family. May form heterodimeric complexes with TALE/KNOX proteins STM, KNAT1/BP, KNAT2 and KNAT5. Interacts with OFP1, OFP2, OFP4 and OFP5. Interacts with KNATM, isoform KNATM-B. Expressed in lateral organs.

The protein localises to the nucleus. Its function is as follows. Transcription factor that establishes leaf shape by repressing growth in specific subdomains of the leaf. Negatively regulates knox homeobox gene KNAT1/BP expression. The sequence is that of BEL1-like homeodomain protein 2 (BLH2) from Arabidopsis thaliana (Mouse-ear cress).